A 234-amino-acid polypeptide reads, in one-letter code: Ribitol-5-phosphate cytidylyltransferase (234 aa).

CTP contacts are provided by residues 7 to 10 (LAGG) and 79 to 85 (GSIVQKS).

Belongs to the IspD/TarI cytidylyltransferase family. TarI subfamily.

It catalyses the reaction D-ribitol 5-phosphate + CTP + H(+) = CDP-L-ribitol + diphosphate. The protein operates within cell wall biogenesis; poly(ribitol phosphate) teichoic acid biosynthesis. Catalyzes the transfer of the cytidylyl group of CTP to D-ribitol 5-phosphate. In Lacticaseibacillus paracasei (strain ATCC 334 / BCRC 17002 / CCUG 31169 / CIP 107868 / KCTC 3260 / NRRL B-441) (Lactobacillus paracasei), this protein is Ribitol-5-phosphate cytidylyltransferase.